We begin with the raw amino-acid sequence, 740 residues long: Alpha-1,6-mannosylglycoprotein 6-beta-N-acetylglucosaminyltransferase A (740 aa).

Residues 1–13 (MAFFSPWKLSSQK) lie on the Cytoplasmic side of the membrane. A helical; Signal-anchor for type II membrane protein membrane pass occupies residues 14 to 30 (LGFFLVTFGFIWGMMLL). The Lumenal portion of the chain corresponds to 31 to 740 (HFTIQQRTQP…GQVALCKDCL (710 aa)). 3 N-linked (GlcNAc...) asparagine glycosylation sites follow: N109, N114, and N117. 9 disulfides stabilise this stretch: C144–C182, C155–C195, C171–C337, C371–C625, C648–C723, C652–C725, C659–C712, C680–C701, and C736–C739. The segment at 212 to 740 (NSLAEIRTDF…GQVALCKDCL (529 aa)) is sufficient for catalytic activity. N333 is a glycosylation site (N-linked (GlcNAc...) asparagine). 377–378 (DS) serves as a coordination point for substrate. 2 N-linked (GlcNAc...) asparagine glycosylation sites follow: N432 and N446. E525 serves as a coordination point for UDP-N-acetyl-alpha-D-glucosamine. K553 serves as a coordination point for substrate.

Belongs to the glycosyltransferase 18 family. In terms of processing, N-glycosylated. Post-translationally, a secreted form is released from the membrane after cleavage by gamma-secretase. Detected in cerebellum.

Its subcellular location is the golgi apparatus membrane. The protein localises to the perikaryon. It localises to the secreted. The enzyme catalyses N(4)-{beta-D-GlcNAc-(1-&gt;2)-[beta-D-GlcNAc-(1-&gt;4)]-alpha-D-Man-(1-&gt;3)-[beta-D-GlcNAc-(1-&gt;2)-alpha-D-Man-(1-&gt;6)]-beta-D-Man-(1-&gt;4)-beta-D-GlcNAc-(1-&gt;4)-beta-D-GlcNAc}-L-asparaginyl-[protein] + UDP-N-acetyl-alpha-D-glucosamine = N(4)-{beta-D-GlcNAc-(1-&gt;2)-[beta-D-GlcNAc-(1-&gt;4)]-alpha-D-Man-(1-&gt;3)-[beta-D-GlcNAc-(1-&gt;2)-[beta-D-GlcNAc-(1-&gt;6)]-alpha-D-Man-(1-&gt;6)]-beta-D-Man-(1-&gt;4)-beta-D-GlcNAc-(1-&gt;4)-beta-D-GlcNAc}-L-asparaginyl-[protein] + UDP + H(+). Its pathway is protein modification; protein glycosylation. Functionally, catalyzes the addition of N-acetylglucosamine (GlcNAc) in beta 1-6 linkage to the alpha-linked mannose of biantennary N-linked oligosaccharides. Catalyzes an important step in the biosynthesis of branched, complex-type N-glycans, such as those found on EGFR, TGFR (TGF-beta receptor) and CDH2. Via its role in the biosynthesis of complex N-glycans, plays an important role in the activation of cellular signaling pathways, reorganization of the actin cytoskeleton, cell-cell adhesion and cell migration. MGAT5-dependent EGFR N-glycosylation enhances the interaction between EGFR and LGALS3 and thereby prevents rapid EGFR endocytosis and prolongs EGFR signaling. Required for efficient interaction between TGFB1 and its receptor. Enhances activation of intracellular signaling pathways by several types of growth factors, including FGF2, PDGF, IGF, TGFB1 and EGF. MGAT5-dependent CDH2 N-glycosylation inhibits CDH2-mediated homotypic cell-cell adhesion and contributes to the regulation of downstream signaling pathways. Promotes cell migration. Contributes to the regulation of the inflammatory response. MGAT5-dependent TCR N-glycosylation enhances the interaction between TCR and LGALS3, limits agonist-induced TCR clustering, and thereby dampens TCR-mediated responses to antigens. Required for normal leukocyte evasation and accumulation at sites of inflammation. Inhibits attachment of monocytes to the vascular endothelium and subsequent monocyte diapedesis. Promotes proliferation of umbilical vein endothelial cells and angiogenesis, at least in part by promoting the release of the growth factor FGF2 from the extracellular matrix. The protein is Alpha-1,6-mannosylglycoprotein 6-beta-N-acetylglucosaminyltransferase A (Mgat5) of Mus musculus (Mouse).